A 449-amino-acid chain; its full sequence is Glutamyl-tRNA reductase (449 aa).

Substrate contacts are provided by residues 58 to 61 (TCNR), S121, 126 to 128 (ETQ), and Q132. C59 (nucleophile) is an active-site residue. 203-208 (GLGEMA) serves as a coordination point for NADP(+).

It belongs to the glutamyl-tRNA reductase family. In terms of assembly, homodimer.

The enzyme catalyses (S)-4-amino-5-oxopentanoate + tRNA(Glu) + NADP(+) = L-glutamyl-tRNA(Glu) + NADPH + H(+). The protein operates within porphyrin-containing compound metabolism; protoporphyrin-IX biosynthesis; 5-aminolevulinate from L-glutamyl-tRNA(Glu): step 1/2. In terms of biological role, catalyzes the NADPH-dependent reduction of glutamyl-tRNA(Glu) to glutamate 1-semialdehyde (GSA). The polypeptide is Glutamyl-tRNA reductase (Helicobacter pylori (strain G27)).